Reading from the N-terminus, the 46-residue chain is Major cold shock protein (46 aa).

The 46-residue stretch at 1-46 (DKGFGFITPADGSKDVFVHFSAIQSNDFKTLDEGQKVEFSIENGAK) folds into the CSD domain.

In terms of assembly, homodimer.

The protein localises to the cytoplasm. The protein is Major cold shock protein (cspA) of Yersinia enterocolitica.